The chain runs to 208 residues: Large ribosomal subunit protein uL3 (208 aa).

Residues 130–168 (GGSKTHGQSDRLRAPGSVGGSSFPSRTFKGQRMAGRKGS) form a disordered region.

Belongs to the universal ribosomal protein uL3 family. In terms of assembly, part of the 50S ribosomal subunit. Forms a cluster with proteins L14 and L19.

Its function is as follows. One of the primary rRNA binding proteins, it binds directly near the 3'-end of the 23S rRNA, where it nucleates assembly of the 50S subunit. This Chloroherpeton thalassium (strain ATCC 35110 / GB-78) protein is Large ribosomal subunit protein uL3.